A 203-amino-acid chain; its full sequence is Putative 3-methyladenine DNA glycosylase (203 aa).

The protein belongs to the DNA glycosylase MPG family.

The polypeptide is Putative 3-methyladenine DNA glycosylase (Clostridium botulinum (strain Loch Maree / Type A3)).